Here is a 443-residue protein sequence, read N- to C-terminus: ATP-dependent protease ATPase subunit HslU (443 aa).

Residues Ile-19, 61–66, Asp-256, Glu-321, and Arg-393 contribute to the ATP site; that span reads GVGKTE.

Belongs to the ClpX chaperone family. HslU subfamily. A double ring-shaped homohexamer of HslV is capped on each side by a ring-shaped HslU homohexamer. The assembly of the HslU/HslV complex is dependent on binding of ATP.

The protein resides in the cytoplasm. Its function is as follows. ATPase subunit of a proteasome-like degradation complex; this subunit has chaperone activity. The binding of ATP and its subsequent hydrolysis by HslU are essential for unfolding of protein substrates subsequently hydrolyzed by HslV. HslU recognizes the N-terminal part of its protein substrates and unfolds these before they are guided to HslV for hydrolysis. This Ralstonia pickettii (strain 12J) protein is ATP-dependent protease ATPase subunit HslU.